Consider the following 511-residue polypeptide: L-aspartate oxidase (511 aa).

FAD contacts are provided by residues 16 to 19 and 48 to 55; these read AGLA and SSAWAQGG. Arginine 282 (proton donor/acceptor) is an active-site residue. FAD contacts are provided by residues glutamate 365 and 381–382; that span reads SL.

It belongs to the FAD-dependent oxidoreductase 2 family. NadB subfamily. The cofactor is FAD.

The protein resides in the cytoplasm. It carries out the reaction L-aspartate + O2 = iminosuccinate + H2O2. The protein operates within cofactor biosynthesis; NAD(+) biosynthesis; iminoaspartate from L-aspartate (oxidase route): step 1/1. In terms of biological role, catalyzes the oxidation of L-aspartate to iminoaspartate, the first step in the de novo biosynthesis of NAD(+). The chain is L-aspartate oxidase (nadB) from Caulobacter vibrioides (strain ATCC 19089 / CIP 103742 / CB 15) (Caulobacter crescentus).